Here is a 101-residue protein sequence, read N- to C-terminus: MTKKEQSIWRKEMLALMNEDADWYRNEDTERFKRIQELAKKIETASTRQFSSHISKERFEAYQRMGLQFKEIAEEFHITTTALQQWHKDNGYPIYNKNNRK.

Might be involved in the expression of prgA, but is not required for activation of the expression of prgB. This is Putative regulatory protein PrgT (prgT) from Enterococcus faecalis (strain ATCC 47077 / OG1RF).